We begin with the raw amino-acid sequence, 555 residues long: 2-succinyl-5-enolpyruvyl-6-hydroxy-3-cyclohexene-1-carboxylate synthase (555 aa).

Belongs to the TPP enzyme family. MenD subfamily. Homodimer. Mg(2+) serves as cofactor. The cofactor is Mn(2+). Thiamine diphosphate is required as a cofactor.

The catalysed reaction is isochorismate + 2-oxoglutarate + H(+) = 5-enolpyruvoyl-6-hydroxy-2-succinyl-cyclohex-3-ene-1-carboxylate + CO2. It functions in the pathway quinol/quinone metabolism; 1,4-dihydroxy-2-naphthoate biosynthesis; 1,4-dihydroxy-2-naphthoate from chorismate: step 2/7. The protein operates within quinol/quinone metabolism; menaquinone biosynthesis. In terms of biological role, catalyzes the thiamine diphosphate-dependent decarboxylation of 2-oxoglutarate and the subsequent addition of the resulting succinic semialdehyde-thiamine pyrophosphate anion to isochorismate to yield 2-succinyl-5-enolpyruvyl-6-hydroxy-3-cyclohexene-1-carboxylate (SEPHCHC). This chain is 2-succinyl-5-enolpyruvyl-6-hydroxy-3-cyclohexene-1-carboxylate synthase, found in Kineococcus radiotolerans (strain ATCC BAA-149 / DSM 14245 / SRS30216).